A 450-amino-acid chain; its full sequence is Phosphoglucosamine mutase (450 aa).

The active-site Phosphoserine intermediate is the Ser97. The Mg(2+) site is built by Ser97, Asp236, Asp238, and Asp240. At Ser97 the chain carries Phosphoserine.

The protein belongs to the phosphohexose mutase family. Mg(2+) serves as cofactor. In terms of processing, activated by phosphorylation.

It catalyses the reaction alpha-D-glucosamine 1-phosphate = D-glucosamine 6-phosphate. Functionally, catalyzes the conversion of glucosamine-6-phosphate to glucosamine-1-phosphate. The protein is Phosphoglucosamine mutase of Prochlorococcus marinus (strain MIT 9215).